The sequence spans 1126 residues: Stress response protein nst1 (1126 aa).

Positions 1-17 (MSTAAPAASATNSAIPA) are enriched in low complexity. Disordered stretches follow at residues 1-192 (MSTA…STQE), 266-348 (NQGS…ARAA), 404-453 (AAHQ…EQRM), 492-774 (LLEE…NGLP), 823-914 (NGAR…AQRD), 939-965 (LSQSLPGATAPGPLPGPARASFGGPSL), and 1075-1126 (FEPD…PMGF). A compositionally biased stretch (basic residues) spans 35–45 (NRKKQKRRQKQ). Basic and acidic residues predominate over residues 96-111 (ANHKDDQDSVDAHDDY). Residues 125–136 (TGRKSKKKKGKK) show a composition bias toward basic residues. Positions 291–300 (GQHTRTQGQF) are enriched in polar residues. Acidic residues-rich tracts occupy residues 311-344 (PEEEDDDDLEEDYDEDEEDDEPYSDEDSDDEDDE) and 419-448 (DEEDYDEEEDEDYDSQEDEDYEEDEMDTMT). The stretch at 479–655 (KVAEQRQQKL…KREYQAKRTS (177 aa)) forms a coiled coil. 2 stretches are compositionally biased toward basic and acidic residues: residues 492–512 (LLEEETRNEQRNAKKAREAQK) and 522–651 (QAKE…EYQA). Composition is skewed to polar residues over residues 655–670 (SPFSSNQHPQISSSPV) and 694–721 (QPSQQDSHTSSPHSQPASTDPSQASVSP). Residues 727–737 (SQSSGASSVAS) show a composition bias toward low complexity. 2 stretches are compositionally biased toward polar residues: residues 846–860 (GQQQIPGAFSAQQSG) and 867–885 (RQPSGSFERSPLEGQTQPM). Over residues 886–898 (PISRPSPIKRPSS) the composition is skewed to low complexity. Residues 902–914 (DQRKNGDRTAQRD) are compositionally biased toward basic and acidic residues. Positions 1115–1126 (VLRQFSSPPMGF) are enriched in polar residues.

Belongs to the NST1 family.

It localises to the cytoplasm. Its function is as follows. May act as a negative regulator of salt tolerance. The protein is Stress response protein nst1 (nst1) of Aspergillus clavatus (strain ATCC 1007 / CBS 513.65 / DSM 816 / NCTC 3887 / NRRL 1 / QM 1276 / 107).